A 407-amino-acid polypeptide reads, in one-letter code: 1-deoxy-D-xylulose 5-phosphate reductoisomerase (407 aa).

Residues Thr25, Gly26, Ser27, Ile28, Asn53, and Asn136 each contribute to the NADPH site. 1-deoxy-D-xylulose 5-phosphate is bound at residue Lys137. Glu138 serves as a coordination point for NADPH. Asp162 is a Mn(2+) binding site. 1-deoxy-D-xylulose 5-phosphate is bound by residues Ser163, Glu164, Ser188, and His211. Glu164 lines the Mn(2+) pocket. NADPH is bound at residue Gly217. Residues Ser224, Asn229, Lys230, and Glu233 each coordinate 1-deoxy-D-xylulose 5-phosphate. Glu233 is a Mn(2+) binding site.

This sequence belongs to the DXR family. The cofactor is Mg(2+). Mn(2+) serves as cofactor.

The enzyme catalyses 2-C-methyl-D-erythritol 4-phosphate + NADP(+) = 1-deoxy-D-xylulose 5-phosphate + NADPH + H(+). Its pathway is isoprenoid biosynthesis; isopentenyl diphosphate biosynthesis via DXP pathway; isopentenyl diphosphate from 1-deoxy-D-xylulose 5-phosphate: step 1/6. Functionally, catalyzes the NADPH-dependent rearrangement and reduction of 1-deoxy-D-xylulose-5-phosphate (DXP) to 2-C-methyl-D-erythritol 4-phosphate (MEP). This is 1-deoxy-D-xylulose 5-phosphate reductoisomerase from Nitrobacter hamburgensis (strain DSM 10229 / NCIMB 13809 / X14).